The sequence spans 502 residues: UPF0371 protein CLJ_B0384 (502 aa).

This sequence belongs to the UPF0371 family.

This is UPF0371 protein CLJ_B0384 from Clostridium botulinum (strain 657 / Type Ba4).